We begin with the raw amino-acid sequence, 201 residues long: Small ribosomal subunit protein uS4c (201 aa).

The disordered stretch occupies residues 20–44 (GLTSKRPRAGSDLRNQSRSGKKSQY). Positions 89 to 152 (MRLDNILFRL…NSRTLVQNLL (64 aa)) constitute an S4 RNA-binding domain.

The protein belongs to the universal ribosomal protein uS4 family. Part of the 30S ribosomal subunit. Contacts protein S5. The interaction surface between S4 and S5 is involved in control of translational fidelity.

The protein localises to the plastid. It is found in the chloroplast. Its function is as follows. One of the primary rRNA binding proteins, it binds directly to 16S rRNA where it nucleates assembly of the body of the 30S subunit. Functionally, with S5 and S12 plays an important role in translational accuracy. In Aethionema cordifolium (Lebanon stonecress), this protein is Small ribosomal subunit protein uS4c (rps4).